The primary structure comprises 167 residues: Lipoprotein signal peptidase (167 aa).

Helical transmembrane passes span Leu7–Val27, Phe61–Trp81, and Asn87–Ile107. Residues Asp117 and Asp136 contribute to the active site. Residues Ile126 to Ile146 traverse the membrane as a helical segment.

It belongs to the peptidase A8 family.

The protein localises to the cell inner membrane. It carries out the reaction Release of signal peptides from bacterial membrane prolipoproteins. Hydrolyzes -Xaa-Yaa-Zaa-|-(S,diacylglyceryl)Cys-, in which Xaa is hydrophobic (preferably Leu), and Yaa (Ala or Ser) and Zaa (Gly or Ala) have small, neutral side chains.. It functions in the pathway protein modification; lipoprotein biosynthesis (signal peptide cleavage). This protein specifically catalyzes the removal of signal peptides from prolipoproteins. In Bartonella tribocorum (strain CIP 105476 / IBS 506), this protein is Lipoprotein signal peptidase.